The following is a 595-amino-acid chain: Probable translation initiation factor IF-2 (595 aa).

Residues 11-225 (LRTPIVAVLG…ILVGLAQRYL (215 aa)) enclose the tr-type G domain. The G1 stretch occupies residues 20–27 (GHVDHGKT). Position 20-27 (20-27 (GHVDHGKT)) interacts with GTP. The interval 45–49 (GITQH) is G2. The tract at residues 81–84 (DTPG) is G3. Residues 81 to 85 (DTPGH) and 135 to 138 (NKID) contribute to the GTP site. The segment at 135-138 (NKID) is G4. Residues 203–205 (SAL) are G5.

It belongs to the TRAFAC class translation factor GTPase superfamily. Classic translation factor GTPase family. IF-2 subfamily.

Function in general translation initiation by promoting the binding of the formylmethionine-tRNA to ribosomes. Seems to function along with eIF-2. This Archaeoglobus fulgidus (strain ATCC 49558 / DSM 4304 / JCM 9628 / NBRC 100126 / VC-16) protein is Probable translation initiation factor IF-2 (infB).